The following is a 242-amino-acid chain: Orotidine 5'-phosphate decarboxylase (242 aa).

Residues Asp16, Lys37, 64 to 73 (DLKFHDIPNT), Thr128, Arg190, Gln199, Gly219, and Arg220 each bind substrate. Lys66 functions as the Proton donor in the catalytic mechanism.

Belongs to the OMP decarboxylase family. Type 1 subfamily. As to quaternary structure, homodimer.

It carries out the reaction orotidine 5'-phosphate + H(+) = UMP + CO2. It participates in pyrimidine metabolism; UMP biosynthesis via de novo pathway; UMP from orotate: step 2/2. Catalyzes the decarboxylation of orotidine 5'-monophosphate (OMP) to uridine 5'-monophosphate (UMP). This is Orotidine 5'-phosphate decarboxylase from Prochlorococcus marinus (strain MIT 9312).